Reading from the N-terminus, the 113-residue chain is Cell division topological specificity factor (113 aa).

This sequence belongs to the MinE family.

In terms of biological role, prevents the cell division inhibition by proteins MinC and MinD at internal division sites while permitting inhibition at polar sites. This ensures cell division at the proper site by restricting the formation of a division septum at the midpoint of the long axis of the cell. In Methylobacterium radiotolerans (strain ATCC 27329 / DSM 1819 / JCM 2831 / NBRC 15690 / NCIMB 10815 / 0-1), this protein is Cell division topological specificity factor.